A 355-amino-acid polypeptide reads, in one-letter code: 3-isopropylmalate dehydrogenase (355 aa).

4 residues coordinate substrate: arginine 90, arginine 100, arginine 128, and aspartate 222. Mg(2+) contacts are provided by aspartate 222, aspartate 246, and aspartate 250. Glycine 280 to asparagine 292 contacts NAD(+).

This sequence belongs to the isocitrate and isopropylmalate dehydrogenases family. LeuB type 1 subfamily. In terms of assembly, homodimer. Requires Mg(2+) as cofactor. The cofactor is Mn(2+).

The protein resides in the cytoplasm. It catalyses the reaction (2R,3S)-3-isopropylmalate + NAD(+) = 4-methyl-2-oxopentanoate + CO2 + NADH. The protein operates within amino-acid biosynthesis; L-leucine biosynthesis; L-leucine from 3-methyl-2-oxobutanoate: step 3/4. Its function is as follows. Catalyzes the oxidation of 3-carboxy-2-hydroxy-4-methylpentanoate (3-isopropylmalate) to 3-carboxy-4-methyl-2-oxopentanoate. The product decarboxylates to 4-methyl-2 oxopentanoate. This chain is 3-isopropylmalate dehydrogenase, found in Burkholderia thailandensis (strain ATCC 700388 / DSM 13276 / CCUG 48851 / CIP 106301 / E264).